The primary structure comprises 308 residues: MQEKISKFEDFLTQLQQNITTALEQHETNAAKFISDKWQKPDTPDQKLKGYGNSMIIEGGEIFEKGVVAFSRVHGSELPPSATAKRQELAGKSFIATGLSLVIHPRNPFVPTSHANFRIFIAGADTDTPIWWFGGGFDLTPYYPFEEDAIHWHQTAKNICDKHDKTYYSKFKKWCDEYFYLKHRDECRGVGGLFFDDLNDKSFDECFNFVTDCANSYLDAYIPIVAQRKNIEYSQKHKDFQLYRRGRYVEFNLVFDRGTIFGLQSGGRTESILSSMPPMASWRYNWQPEQNSEEAKVYQYIKPRDWIK.

Residue S100 coordinates substrate. Residues H104 and H114 each contribute to the a divalent metal cation site. H114 functions as the Proton donor in the catalytic mechanism. 116–118 (NFR) provides a ligand contact to substrate. A divalent metal cation is bound by residues H153 and H183. An important for dimerization region spans residues 248-283 (YVEFNLVFDRGTIFGLQSGGRTESILSSMPPMASWR). 266 to 268 (GGR) serves as a coordination point for substrate.

Belongs to the aerobic coproporphyrinogen-III oxidase family. In terms of assembly, homodimer. It depends on a divalent metal cation as a cofactor.

It localises to the cytoplasm. It carries out the reaction coproporphyrinogen III + O2 + 2 H(+) = protoporphyrinogen IX + 2 CO2 + 2 H2O. Its pathway is porphyrin-containing compound metabolism; protoporphyrin-IX biosynthesis; protoporphyrinogen-IX from coproporphyrinogen-III (O2 route): step 1/1. Its function is as follows. Involved in the heme biosynthesis. Catalyzes the aerobic oxidative decarboxylation of propionate groups of rings A and B of coproporphyrinogen-III to yield the vinyl groups in protoporphyrinogen-IX. This chain is Oxygen-dependent coproporphyrinogen-III oxidase, found in Francisella tularensis subsp. novicida (strain U112).